Here is a 129-residue protein sequence, read N- to C-terminus: Large ribosomal subunit protein bL19 (129 aa).

It belongs to the bacterial ribosomal protein bL19 family.

This protein is located at the 30S-50S ribosomal subunit interface and may play a role in the structure and function of the aminoacyl-tRNA binding site. The chain is Large ribosomal subunit protein bL19 from Burkholderia mallei (strain NCTC 10247).